A 334-amino-acid polypeptide reads, in one-letter code: Probable GTP 3',8-cyclase (334 aa).

Residues 24–256 enclose the Radical SAM core domain; the sequence is PYGRKVTGLR…RKKYMIDGVE (233 aa). A GTP-binding site is contributed by Arg33. [4Fe-4S] cluster-binding residues include Cys40 and Cys44. An S-adenosyl-L-methionine-binding site is contributed by Tyr46. A [4Fe-4S] cluster-binding site is contributed by Cys47. Lys85 provides a ligand contact to GTP. Residue Gly89 coordinates S-adenosyl-L-methionine. Position 113 (Thr113) interacts with GTP. Ser137 contacts S-adenosyl-L-methionine. Lys176 contributes to the GTP binding site. Positions 269 and 272 each coordinate [4Fe-4S] cluster. 274–276 serves as a coordination point for GTP; the sequence is RLR. Cys286 is a binding site for [4Fe-4S] cluster.

Belongs to the radical SAM superfamily. MoaA family. It depends on [4Fe-4S] cluster as a cofactor.

The catalysed reaction is GTP + AH2 + S-adenosyl-L-methionine = (8S)-3',8-cyclo-7,8-dihydroguanosine 5'-triphosphate + 5'-deoxyadenosine + L-methionine + A + H(+). It participates in cofactor biosynthesis; molybdopterin biosynthesis. Its function is as follows. Catalyzes the cyclization of GTP to (8S)-3',8-cyclo-7,8-dihydroguanosine 5'-triphosphate. This is Probable GTP 3',8-cyclase from Methanosarcina mazei (strain ATCC BAA-159 / DSM 3647 / Goe1 / Go1 / JCM 11833 / OCM 88) (Methanosarcina frisia).